Reading from the N-terminus, the 524-residue chain is Casein kinase I homolog 3 (524 aa).

The 306-residue stretch at 14 to 319 folds into the Protein kinase domain; the sequence is YAVGPKIGEG…YLISLMDDAL (306 aa). Residues 20 to 28 and Lys60 each bind ATP; that span reads IGEGSFGVI. Asp150 (proton acceptor) is an active-site residue. Disordered stretches follow at residues 352-414 and 427-474; these read HGYG…KQQH and PETH…EHNL. The segment covering 360-373 has biased composition (low complexity); the sequence is RVNGNTARNNVNTN. Composition is skewed to polar residues over residues 374–413 and 429–474; these read SKTR…TKQQ and THSN…EHNL. The YXXZ targeting signal motif lies at 444-447; that stretch reads YDSI. 7 S-palmitoyl cysteine lipidation sites follow: Cys517, Cys518, Cys519, Cys520, Cys522, Cys523, and Cys524.

This sequence belongs to the protein kinase superfamily. CK1 Ser/Thr protein kinase family. Casein kinase I subfamily.

The protein localises to the cell membrane. Its subcellular location is the nucleus membrane. It is found in the vacuole membrane. It catalyses the reaction L-seryl-[protein] + ATP = O-phospho-L-seryl-[protein] + ADP + H(+). The enzyme catalyses L-threonyl-[protein] + ATP = O-phospho-L-threonyl-[protein] + ADP + H(+). In terms of biological role, casein kinases are operationally defined by their preferential utilization of acidic proteins such as caseins as substrates. Phosphorylates MON1, inhibiting the guanine nucleotide exchange factor activity of the MON1-CCZ1 complex, possibly by preventing its recruitment to membranes by small GTPase RAB5 homologs. The sequence is that of Casein kinase I homolog 3 (YCK3) from Saccharomyces cerevisiae (strain ATCC 204508 / S288c) (Baker's yeast).